A 417-amino-acid chain; its full sequence is Dibenzothiophene monooxygenase (417 aa).

The segment at 18–124 is helical N-terminus; it reads NDPVAVARGL…HLYTQIAQNN (107 aa). FMN is bound by residues Y96, 129-134, 159-163, R282, 369-370, and H391; these read NASSEN, KHFCS, and AR. The segment at 125–233 is central beta-barrel N-terminus; it reads WWTGNASSEN…KVEPDEVLGA (109 aa). The interval 131 to 142 is lid loop; it reads SSENNSHVLDWK. The tract at residues 234–417 is helical C-terminus; sequence PNAFVLAFIQ…GQYPIPGFTS (184 aa).

It belongs to the DszC flavin monooxygenase family. Homotetramer formed by a dimer of dimers; FMN binds between monomers of the homodimer.

It localises to the cytoplasm. The catalysed reaction is dibenzothiophene + 2 FMNH2 + 2 O2 = dibenzothiophene 5,5-dioxide + 2 FMN + 2 H2O + 2 H(+). It carries out the reaction dibenzothiophene + FMNH2 + O2 = dibenzothiophene 5-oxide + FMN + H2O + H(+). It catalyses the reaction dibenzothiophene 5-oxide + FMNH2 + O2 = dibenzothiophene 5,5-dioxide + FMN + H2O + H(+). It participates in sulfur metabolism; dibenzothiophene degradation. Its activity is regulated as follows. DBT degradation completely inhibited by Cu(2+), Mn(2+), p-chloromercuribenzoic acid, 2,2-bipyridyl, 1,10-phenanthroline, and strongly inhibited by Zn(2+), 5,5'- Dithiobis(2-nitrobenzoic acid) and 8-quinolinol. Functionally, catalyzes the first step of the '4S' desulfurization pathway that removes covalently bound sulfur from dibenzothiophene (DBT) without breaking carbon-carbon bonds. Sulfur dioxygenase which converts DBT to DBT-sulfone (DBTO2 or DBT 5,5-dioxide) in a stepwise manner. Also acts on thioxanthen-9-one and 4,6-dimethyl DBT and 2,8-dimethyl DBT. This is Dibenzothiophene monooxygenase from Rhodococcus erythropolis (Arthrobacter picolinophilus).